We begin with the raw amino-acid sequence, 273 residues long: MSEAGTPAEALTYEQAIANLRQTADTGDRYYAAWWLGRFRMKQPEAIALLIEALDDSLDRAPDGGYPLRRNAARALGKLESPEAIAPLIACLQCEDYYVREAATQSLGELQATVAVPALLKLLEGGPEAIAAIPGKPHLTQPADAVMETLGQLRATVAVPVVQAFLEHPIDKIRLAAARSLYQLTGDDHYAERVVQGLSDPKLQRRRSALMDLGAIGYLPAAPQIAQTLAENSLKLISLKGLLDTHLRQQTPEAIAELDESAIALMDLMDGLL.

This sequence belongs to the CpcE/RpcE/PecE family. CpcE and CpcF associate to form a lyase.

Required for the chromophorylation of the cpcA gene product. This Synechococcus elongatus (strain ATCC 33912 / PCC 7942 / FACHB-805) (Anacystis nidulans R2) protein is Phycocyanobilin lyase subunit alpha (cpcE).